Here is a 635-residue protein sequence, read N- to C-terminus: Chaperone protein DnaK (635 aa).

T198 carries the post-translational modification Phosphothreonine; by autocatalysis. Positions 606–635 (QATAASPGAEAPKADDDVVDAEFSEVDENK) are disordered. Residues 622–635 (DVVDAEFSEVDENK) are compositionally biased toward acidic residues.

This sequence belongs to the heat shock protein 70 family.

In terms of biological role, acts as a chaperone. This chain is Chaperone protein DnaK, found in Novosphingobium aromaticivorans (strain ATCC 700278 / DSM 12444 / CCUG 56034 / CIP 105152 / NBRC 16084 / F199).